The sequence spans 100 residues: Urease subunit gamma (100 aa).

The protein belongs to the urease gamma subunit family. In terms of assembly, heterotrimer of UreA (gamma), UreB (beta) and UreC (alpha) subunits. Three heterotrimers associate to form the active enzyme.

The protein localises to the cytoplasm. It catalyses the reaction urea + 2 H2O + H(+) = hydrogencarbonate + 2 NH4(+). The protein operates within nitrogen metabolism; urea degradation; CO(2) and NH(3) from urea (urease route): step 1/1. This is Urease subunit gamma from Yersinia bercovieri.